Consider the following 366-residue polypeptide: Aminomethyltransferase (366 aa).

This sequence belongs to the GcvT family. In terms of assembly, the glycine cleavage system is composed of four proteins: P, T, L and H.

The catalysed reaction is N(6)-[(R)-S(8)-aminomethyldihydrolipoyl]-L-lysyl-[protein] + (6S)-5,6,7,8-tetrahydrofolate = N(6)-[(R)-dihydrolipoyl]-L-lysyl-[protein] + (6R)-5,10-methylene-5,6,7,8-tetrahydrofolate + NH4(+). In terms of biological role, the glycine cleavage system catalyzes the degradation of glycine. The protein is Aminomethyltransferase of Chlorobium chlorochromatii (strain CaD3).